The primary structure comprises 146 residues: Hemoglobin subunit beta (146 aa).

In terms of domain architecture, Globin spans 2-146; that stretch reads HWTETERATI…VVAALSREYH (145 aa). Residues histidine 63 and histidine 92 each contribute to the heme b site.

It belongs to the globin family. In terms of assembly, heterotetramer of two alpha chains and two beta chains (an easy dimerization is also reported). In terms of tissue distribution, red blood cells.

Involved in oxygen transport from the lung to the various peripheral tissues. The chain is Hemoglobin subunit beta (HBB) from Latimeria chalumnae (Coelacanth).